A 97-amino-acid polypeptide reads, in one-letter code: UPF0235 protein HAPS_1504 (97 aa).

Belongs to the UPF0235 family.

The chain is UPF0235 protein HAPS_1504 from Glaesserella parasuis serovar 5 (strain SH0165) (Haemophilus parasuis).